The following is an 852-amino-acid chain: Envelope glycoprotein gp160 (852 aa).

An N-terminal signal peptide occupies residues 1 to 24 (MAHVNNYLLVTLLLISIYGYMGKN). At 25–677 (FVTVFYGIPA…FTSWMAYIRL (653 aa)) the chain is on the extracellular side. Residue Asn37 is glycosylated (N-linked (GlcNAc...) asparagine; by host). Cys44 and Cys57 form a disulfide bridge. 11 N-linked (GlcNAc...) asparagine; by host glycosylation sites follow: Asn70, Asn114, Asn148, Asn195, Asn205, Asn237, Asn247, Asn270, Asn276, Asn287, and Asn298. 4 disulfides stabilise this stretch: Cys101–Cys213, Cys108–Cys204, Cys113–Cys162, and Cys236–Cys248. Residues 113–161 (CNKTWSSASKETTTSSASLRSSTQTLLNEDSKCIQNDSCAGIGLEEMID) are V1. The tract at residues 162 to 204 (CQFKMTGLKRDESKQYKDTWYKQDLVCEKGTRSNESKCYIKTC) is V2. Residues 303 to 335 (CKRPGNKMVVPIRTVSGILFHSQPINKRPKQAW) form a V3 region. Cys303 and Cys336 are oxidised to a cystine. N-linked (GlcNAc...) asparagine; by host glycosylation is found at Asn341, Asn364, Asn396, Asn406, Asn445, Asn461, and Asn464. 2 disulfides stabilise this stretch: Cys388/Cys444 and Cys395/Cys417. Residues 395–417 (CNMTFFLNWVENRTGLKRNYASC) are V4. The segment at 461–467 (NLTNITV) is V5. Residues 510-530 (GVLVLGFLGFLATAGSAMGAA) form a fusion peptide region. Residues 573–589 (LQARVTAIEKYLKDQAQ) are immunosuppression. Residues Asn609, Asn618, and Asn634 are each glycosylated (N-linked (GlcNAc...) asparagine; by host). The stretch at 622–648 (QQWERQVRFLDANITKLLEEAQIQQEK) forms a coiled coil. Residues 655 to 676 (KLNQWDIFSNWFDFTSWMAYIR) are MPER; binding to GalCer. A helical transmembrane segment spans residues 678–698 (GLYIVIGIVVLRIAIYIIQML). Residues 699–852 (ARLRKGYRPV…IRQGAELALL (154 aa)) are Cytoplasmic-facing. The YXXV motif; contains endocytosis signal signature appears at 705-708 (YRPV). The interval 713-740 (PSYTQQIPIRKDRGQPANEETEEGGGNN) is disordered. Cys771 is lipidated: S-palmitoyl cysteine; by host. The Di-leucine internalization motif motif lies at 851-852 (LL).

In terms of assembly, the mature envelope protein (Env) consists of a homotrimer of non-covalently associated gp120-gp41 heterodimers. The resulting complex protrudes from the virus surface as a spike. There seems to be as few as 10 spikes on the average virion. Interacts with human CD4, CCR5 and CXCR4, to form a P4HB/PDI-CD4-CXCR4-gp120 complex. Gp120 also interacts with the C-type lectins CD209/DC-SIGN and CLEC4M/DC-SIGNR (collectively referred to as DC-SIGN(R)). Gp120 and gp41 interact with GalCer. As to quaternary structure, the mature envelope protein (Env) consists of a homotrimer of non-covalently associated gp120-gp41 heterodimers. The resulting complex protrudes from the virus surface as a spike. There seems to be as few as 10 spikes on the average virion. In terms of processing, specific enzymatic cleavages in vivo yield mature proteins. Envelope glycoproteins are synthesized as an inactive precursor that is heavily N-glycosylated and processed likely by host cell furin in the Golgi to yield the mature SU and TM proteins. The cleavage site between SU and TM requires the minimal sequence [KR]-X-[KR]-R. Palmitoylation of the transmembrane protein and of Env polyprotein (prior to its proteolytic cleavage) is essential for their association with host cell membrane lipid rafts. Palmitoylation is therefore required for envelope trafficking to classical lipid rafts, but not for viral replication.

It is found in the virion membrane. Its subcellular location is the host cell membrane. The protein localises to the host endosome membrane. In terms of biological role, the surface protein gp120 (SU) attaches the virus to the host lymphoid cell by binding to the primary receptor CD4. This interaction induces a structural rearrangement creating a high affinity binding site for a chemokine coreceptor like CXCR4 and/or CCR5. This peculiar 2 stage receptor-interaction strategy allows gp120 to maintain the highly conserved coreceptor-binding site in a cryptic conformation, protected from neutralizing antibodies. Since CD4 also displays a binding site for the disulfide-isomerase P4HB/PDI, a P4HB/PDI-CD4-CXCR4-gp120 complex may form. In that complex, P4HB/PDI could reach and reduce gp120 disulfide bonds, causing major conformational changes in gp120. TXN, another PDI family member could also be involved in disulfide rearrangements in Env during fusion. These changes are transmitted to the transmembrane protein gp41 and are thought to activate its fusogenic potential by unmasking its fusion peptide. Functionally, the surface protein gp120 is a ligand for CD209/DC-SIGN and CLEC4M/DC-SIGNR, which are respectively found on dendritic cells (DCs), and on endothelial cells of liver sinusoids and lymph node sinuses. These interactions allow capture of viral particles at mucosal surfaces by these cells and subsequent transmission to permissive cells. DCs are professional antigen presenting cells, critical for host immunity by inducing specific immune responses against a broad variety of pathogens. They act as sentinels in various tissues where they take up antigen, process it, and present it to T-cells following migration to lymphoid organs. HIV subverts the migration properties of dendritic cells to gain access to CD4+ T-cells in lymph nodes. Virus transmission to permissive T-cells occurs either in trans (without DCs infection, through viral capture and transmission), or in cis (following DCs productive infection, through the usual CD4-gp120 interaction), thereby inducing a robust infection. In trans infection, bound virions remain infectious over days and it is proposed that they are not degraded, but protected in non-lysosomal acidic organelles within the DCs close to the cell membrane thus contributing to the viral infectious potential during DCs' migration from the periphery to the lymphoid tissues. On arrival at lymphoid tissues, intact virions recycle back to DCs' cell surface allowing virus transmission to CD4+ T-cells. Virion capture also seems to lead to MHC-II-restricted viral antigen presentation, and probably to the activation of HIV-specific CD4+ cells. Its function is as follows. The transmembrane protein gp41 (TM) acts as a class I viral fusion protein. Under the current model, the protein has at least 3 conformational states: pre-fusion native state, pre-hairpin intermediate state, and post-fusion hairpin state. During fusion of viral and target intracellular membranes, the coiled coil regions (heptad repeats) assume a trimer-of-hairpins structure, positioning the fusion peptide in close proximity to the C-terminal region of the ectodomain. The formation of this structure appears to drive apposition and subsequent fusion of viral and target cell membranes. Complete fusion occurs in host cell endosomes and is dynamin-dependent, however some lipid transfer might occur at the plasma membrane. The virus undergoes clathrin-dependent internalization long before endosomal fusion, thus minimizing the surface exposure of conserved viral epitopes during fusion and reducing the efficacy of inhibitors targeting these epitopes. Membranes fusion leads to delivery of the nucleocapsid into the cytoplasm. The envelope glycoprotein gp160 precursor down-modulates cell surface CD4 antigen by interacting with it in the endoplasmic reticulum and blocking its transport to the cell surface. In terms of biological role, the gp120-gp41 heterodimer seems to contribute to T-cell depletion during HIV-1 infection. The envelope glycoproteins expressed on the surface of infected cells induce apoptosis through an interaction with uninfected cells expressing the receptor (CD4) and the coreceptors CXCR4 or CCR5. This type of bystander killing may be obtained by at least three distinct mechanisms. First, the interaction between the 2 cells can induce cellular fusion followed by nuclear fusion within the syncytium. Syncytia are condemned to die from apoptosis. Second, the 2 interacting cells may not fuse entirely and simply exchange plasma membrane lipids, after a sort of hemifusion process, followed by rapid death. Third, it is possible that virus-infected cells, on the point of undergoing apoptosis, fuse with CD4-expressing cells, in which case apoptosis is rapidly transmitted from one cell to the other and thus occurs in a sort of contagious fashion. Functionally, the gp120-gp41 heterodimer allows rapid transcytosis of the virus through CD4 negative cells such as simple epithelial monolayers of the intestinal, rectal and endocervical epithelial barriers. Both gp120 and gp41 specifically recognize glycosphingolipids galactosyl-ceramide (GalCer) or 3' sulfo-galactosyl-ceramide (GalS) present in the lipid rafts structures of epithelial cells. Binding to these alternative receptors allows the rapid transcytosis of the virus through the epithelial cells. This transcytotic vesicle-mediated transport of virions from the apical side to the basolateral side of the epithelial cells does not involve infection of the cells themselves. The protein is Envelope glycoprotein gp160 (env) of Human immunodeficiency virus type 2 subtype B (isolate EHO) (HIV-2).